We begin with the raw amino-acid sequence, 60 residues long: Large ribosomal subunit protein bL32 (60 aa).

Belongs to the bacterial ribosomal protein bL32 family.

This Borreliella afzelii (strain PKo) (Borrelia afzelii) protein is Large ribosomal subunit protein bL32.